The following is a 151-amino-acid chain: Copper transporter 3 (151 aa).

A run of 2 helical transmembrane segments spans residues 52–72 (LKMYWVCLAVIFVISAFSECL) and 103–123 (YLVMLAVMSFNGGVFVAAMAG).

Belongs to the copper transporter (Ctr) (TC 1.A.56) family. SLC31A subfamily. Highly expressed in stems and at lower levels in leaves and flowers.

The protein resides in the membrane. In terms of biological role, involved in the transport of copper. This chain is Copper transporter 3 (COPT3), found in Arabidopsis thaliana (Mouse-ear cress).